Consider the following 385-residue polypeptide: Iron uptake system component EfeM (385 aa).

The signal sequence occupies residues 1–22 (MNFTKIAVSAGCILALCAGCGA).

It belongs to the EfeM/EfeO family. Component of the iron transporter efeUOB/M complex composed of EfeU, EfeM and EfeB; EfeU is essential for the complex formation.

It is found in the cell membrane. The protein localises to the membrane raft. Functionally, part of the iron transporter system efeUOB/M involved in iron import. Specifically binds Fe(3+), which is produced by EfeB-mediated oxidation of Fe(2+), and delivers it to the cell membrane permease EfeU. The polypeptide is Iron uptake system component EfeM (Bacillus subtilis (strain 168)).